Here is a 251-residue protein sequence, read N- to C-terminus: Imidazole glycerol phosphate synthase subunit HisF (251 aa).

Residues Asp-11 and Asp-130 contribute to the active site.

The protein belongs to the HisA/HisF family. Heterodimer of HisH and HisF.

The protein localises to the cytoplasm. The enzyme catalyses 5-[(5-phospho-1-deoxy-D-ribulos-1-ylimino)methylamino]-1-(5-phospho-beta-D-ribosyl)imidazole-4-carboxamide + L-glutamine = D-erythro-1-(imidazol-4-yl)glycerol 3-phosphate + 5-amino-1-(5-phospho-beta-D-ribosyl)imidazole-4-carboxamide + L-glutamate + H(+). It functions in the pathway amino-acid biosynthesis; L-histidine biosynthesis; L-histidine from 5-phospho-alpha-D-ribose 1-diphosphate: step 5/9. Its function is as follows. IGPS catalyzes the conversion of PRFAR and glutamine to IGP, AICAR and glutamate. The HisF subunit catalyzes the cyclization activity that produces IGP and AICAR from PRFAR using the ammonia provided by the HisH subunit. This is Imidazole glycerol phosphate synthase subunit HisF from Chlorobaculum tepidum (strain ATCC 49652 / DSM 12025 / NBRC 103806 / TLS) (Chlorobium tepidum).